Reading from the N-terminus, the 363-residue chain is Ribosomal RNA large subunit methyltransferase M (363 aa).

Residues serine 194, cysteine 227–glycine 230, aspartate 246, aspartate 266, and aspartate 284 each bind S-adenosyl-L-methionine. Lysine 313 functions as the Proton acceptor in the catalytic mechanism.

This sequence belongs to the class I-like SAM-binding methyltransferase superfamily. RNA methyltransferase RlmE family. RlmM subfamily. Monomer.

It is found in the cytoplasm. The catalysed reaction is cytidine(2498) in 23S rRNA + S-adenosyl-L-methionine = 2'-O-methylcytidine(2498) in 23S rRNA + S-adenosyl-L-homocysteine + H(+). Catalyzes the 2'-O-methylation at nucleotide C2498 in 23S rRNA. The chain is Ribosomal RNA large subunit methyltransferase M from Haemophilus influenzae (strain ATCC 51907 / DSM 11121 / KW20 / Rd).